The chain runs to 1119 residues: DNA-directed RNA polymerase subunit beta (1119 aa).

The protein belongs to the RNA polymerase beta chain family. As to quaternary structure, the RNAP catalytic core consists of 2 alpha, 1 beta, 1 beta' and 1 omega subunit. When a sigma factor is associated with the core the holoenzyme is formed, which can initiate transcription.

The enzyme catalyses RNA(n) + a ribonucleoside 5'-triphosphate = RNA(n+1) + diphosphate. In terms of biological role, DNA-dependent RNA polymerase catalyzes the transcription of DNA into RNA using the four ribonucleoside triphosphates as substrates. The polypeptide is DNA-directed RNA polymerase subunit beta (Thermus thermophilus (strain ATCC BAA-163 / DSM 7039 / HB27)).